We begin with the raw amino-acid sequence, 54 residues long: Conotoxin mr5.4b (54 aa).

An N-terminal signal peptide occupies residues Ile-1–Ala-14. Residues Gln-15–Asn-40 constitute a propeptide that is removed on maturation. Position 52 is a 4-carboxyglutamate (Glu-52).

This sequence belongs to the conotoxin T superfamily. Post-translationally, contains 2 disulfide bonds that can be either 'C1-C3, C2-C4' or 'C1-C4, C2-C3', since these disulfide connectivities have been observed for conotoxins with cysteine framework V (for examples, see AC P0DQQ7 and AC P81755). In terms of tissue distribution, expressed by the venom duct.

The protein localises to the secreted. This is Conotoxin mr5.4b from Conus marmoreus (Marble cone).